We begin with the raw amino-acid sequence, 267 residues long: Small ribosomal subunit protein uS2 (267 aa).

A disordered region spans residues 224-244 (GRQGEDEDVTEDSFKDNKDAK). Residues 235 to 244 (DSFKDNKDAK) show a composition bias toward basic and acidic residues.

This sequence belongs to the universal ribosomal protein uS2 family.

In Lactiplantibacillus plantarum (strain ATCC BAA-793 / NCIMB 8826 / WCFS1) (Lactobacillus plantarum), this protein is Small ribosomal subunit protein uS2.